The following is a 153-amino-acid chain: Holo-[acyl-carrier-protein] synthase (153 aa).

Positions 24 and 78 each coordinate Mg(2+).

Belongs to the P-Pant transferase superfamily. AcpS family. Requires Mg(2+) as cofactor.

Its subcellular location is the cytoplasm. The enzyme catalyses apo-[ACP] + CoA = holo-[ACP] + adenosine 3',5'-bisphosphate + H(+). Functionally, transfers the 4'-phosphopantetheine moiety from coenzyme A to a Ser of acyl-carrier-protein. This chain is Holo-[acyl-carrier-protein] synthase, found in Bordetella parapertussis (strain 12822 / ATCC BAA-587 / NCTC 13253).